Reading from the N-terminus, the 63-residue chain is Hirudin-P6 (63 aa).

The interaction with thrombin active site stretch occupies residues 1–3; the sequence is MRY. 3 cysteine pairs are disulfide-bonded: Cys-6-Cys-14, Cys-16-Cys-28, and Cys-22-Cys-37. A compositionally biased stretch (basic and acidic residues) spans 35-55; the sequence is KKCVEGEGTRKPQNEGQHDFD. Residues 35-63 are disordered; sequence KKCVEGEGTRKPQNEGQHDFDPIPEEYLS. Thr-43 carries O-linked (GalNAc...) threonine glycosylation. Residues 53-63 are interaction with fibrinogen-binding exosite of thrombin; it reads DFDPIPEEYLS. The residue at position 61 (Tyr-61) is a Sulfotyrosine.

This sequence belongs to the protease inhibitor I14 (hirudin) family. Post-translationally, O-linked glycan consists of Fuc-Gal-GalNAc trisaccharide.

The protein localises to the secreted. In terms of biological role, hirudin is a potent thrombin-specific protease inhibitor. It forms a stable non-covalent complex with alpha-thrombin, thereby abolishing its ability to cleave fibrinogen. The protein is Hirudin-P6 of Hirudinaria manillensis (Asian medical leech).